Consider the following 234-residue polypeptide: 7-carboxy-7-deazaguanine synthase (234 aa).

Residues 1–28 (MPLNCDTKTAGEISSSIPSGSGSHQPAA) form a disordered region. The span at 13–23 (ISSSIPSGSGS) shows a compositional bias: low complexity. Substrate is bound by residues 42–44 (LQG) and Arg-57. The region spanning 48 to 234 (TSGYPTIFIR…LQLHKFIGLP (187 aa)) is the Radical SAM core domain. 3 residues coordinate [4Fe-4S] cluster: Cys-61, Cys-65, and Cys-68. Thr-70 serves as a coordination point for Mg(2+). Residue Thr-100 participates in substrate binding. Residue Gly-102 coordinates S-adenosyl-L-methionine. Residue Pro-234 participates in substrate binding.

This sequence belongs to the radical SAM superfamily. 7-carboxy-7-deazaguanine synthase family. In terms of assembly, homodimer. The cofactor is [4Fe-4S] cluster. S-adenosyl-L-methionine is required as a cofactor. Mg(2+) serves as cofactor.

The catalysed reaction is 6-carboxy-5,6,7,8-tetrahydropterin + H(+) = 7-carboxy-7-deazaguanine + NH4(+). The protein operates within purine metabolism; 7-cyano-7-deazaguanine biosynthesis. Functionally, catalyzes the complex heterocyclic radical-mediated conversion of 6-carboxy-5,6,7,8-tetrahydropterin (CPH4) to 7-carboxy-7-deazaguanine (CDG), a step common to the biosynthetic pathways of all 7-deazapurine-containing compounds. In Methanospirillum hungatei JF-1 (strain ATCC 27890 / DSM 864 / NBRC 100397 / JF-1), this protein is 7-carboxy-7-deazaguanine synthase.